Consider the following 415-residue polypeptide: Histidine--tRNA ligase (415 aa).

This sequence belongs to the class-II aminoacyl-tRNA synthetase family. Homodimer.

It is found in the cytoplasm. The enzyme catalyses tRNA(His) + L-histidine + ATP = L-histidyl-tRNA(His) + AMP + diphosphate + H(+). The chain is Histidine--tRNA ligase from Clostridium botulinum (strain Kyoto / Type A2).